A 381-amino-acid chain; its full sequence is Dual-specificity RNA methyltransferase RlmN (381 aa).

E96 (proton acceptor) is an active-site residue. One can recognise a Radical SAM core domain in the interval 102 to 342 (TDDRGTLCVS…TRTTRGDDID (241 aa)). A disulfide bridge connects residues C109 and C345. Residues C116, C120, and C123 each contribute to the [4Fe-4S] cluster site. Residues 170 to 171 (GE), S202, 224 to 226 (SLH), and N302 each bind S-adenosyl-L-methionine. Catalysis depends on C345, which acts as the S-methylcysteine intermediate.

This sequence belongs to the radical SAM superfamily. RlmN family. Requires [4Fe-4S] cluster as cofactor.

The protein resides in the cytoplasm. It catalyses the reaction adenosine(2503) in 23S rRNA + 2 reduced [2Fe-2S]-[ferredoxin] + 2 S-adenosyl-L-methionine = 2-methyladenosine(2503) in 23S rRNA + 5'-deoxyadenosine + L-methionine + 2 oxidized [2Fe-2S]-[ferredoxin] + S-adenosyl-L-homocysteine. The enzyme catalyses adenosine(37) in tRNA + 2 reduced [2Fe-2S]-[ferredoxin] + 2 S-adenosyl-L-methionine = 2-methyladenosine(37) in tRNA + 5'-deoxyadenosine + L-methionine + 2 oxidized [2Fe-2S]-[ferredoxin] + S-adenosyl-L-homocysteine. Its function is as follows. Specifically methylates position 2 of adenine 2503 in 23S rRNA and position 2 of adenine 37 in tRNAs. m2A2503 modification seems to play a crucial role in the proofreading step occurring at the peptidyl transferase center and thus would serve to optimize ribosomal fidelity. This Pseudomonas putida (strain GB-1) protein is Dual-specificity RNA methyltransferase RlmN.